A 485-amino-acid polypeptide reads, in one-letter code: Aspartyl/glutamyl-tRNA(Asn/Gln) amidotransferase subunit B (485 aa).

The protein belongs to the GatB/GatE family. GatB subfamily. In terms of assembly, heterotrimer of A, B and C subunits.

The enzyme catalyses L-glutamyl-tRNA(Gln) + L-glutamine + ATP + H2O = L-glutaminyl-tRNA(Gln) + L-glutamate + ADP + phosphate + H(+). It carries out the reaction L-aspartyl-tRNA(Asn) + L-glutamine + ATP + H2O = L-asparaginyl-tRNA(Asn) + L-glutamate + ADP + phosphate + 2 H(+). Allows the formation of correctly charged Asn-tRNA(Asn) or Gln-tRNA(Gln) through the transamidation of misacylated Asp-tRNA(Asn) or Glu-tRNA(Gln) in organisms which lack either or both of asparaginyl-tRNA or glutaminyl-tRNA synthetases. The reaction takes place in the presence of glutamine and ATP through an activated phospho-Asp-tRNA(Asn) or phospho-Glu-tRNA(Gln). This chain is Aspartyl/glutamyl-tRNA(Asn/Gln) amidotransferase subunit B, found in Anaplasma marginale (strain St. Maries).